We begin with the raw amino-acid sequence, 498 residues long: Glutamyl-tRNA(Gln) amidotransferase subunit A (498 aa).

Residues Lys-85 and Ser-160 each act as charge relay system in the active site. Ser-184 acts as the Acyl-ester intermediate in catalysis.

It belongs to the amidase family. GatA subfamily. In terms of assembly, heterotrimer of A, B and C subunits.

It catalyses the reaction L-glutamyl-tRNA(Gln) + L-glutamine + ATP + H2O = L-glutaminyl-tRNA(Gln) + L-glutamate + ADP + phosphate + H(+). Allows the formation of correctly charged Gln-tRNA(Gln) through the transamidation of misacylated Glu-tRNA(Gln) in organisms which lack glutaminyl-tRNA synthetase. The reaction takes place in the presence of glutamine and ATP through an activated gamma-phospho-Glu-tRNA(Gln). This Mycolicibacterium vanbaalenii (strain DSM 7251 / JCM 13017 / BCRC 16820 / KCTC 9966 / NRRL B-24157 / PYR-1) (Mycobacterium vanbaalenii) protein is Glutamyl-tRNA(Gln) amidotransferase subunit A.